A 34-amino-acid chain; its full sequence is Protamine (34 aa).

Residues 1 to 34 are disordered; sequence PRRRRQASRPVRRRRRTRRSTAERRRRRVVRRRR.

In terms of tissue distribution, testis.

The protein resides in the nucleus. It localises to the chromosome. Protamines substitute for histones in the chromatin of sperm during the haploid phase of spermatogenesis. They compact sperm DNA into a highly condensed, stable and inactive complex. This Dicentrarchus labrax (European seabass) protein is Protamine.